Consider the following 182-residue polypeptide: ATP-dependent protease subunit HslV (182 aa).

Thr-12 is a catalytic residue. The Na(+) site is built by Ala-167, Cys-170, and Thr-173.

The protein belongs to the peptidase T1B family. HslV subfamily. A double ring-shaped homohexamer of HslV is capped on each side by a ring-shaped HslU homohexamer. The assembly of the HslU/HslV complex is dependent on binding of ATP.

The protein localises to the cytoplasm. The enzyme catalyses ATP-dependent cleavage of peptide bonds with broad specificity.. Its activity is regulated as follows. Allosterically activated by HslU binding. Its function is as follows. Protease subunit of a proteasome-like degradation complex believed to be a general protein degrading machinery. The sequence is that of ATP-dependent protease subunit HslV from Prosthecochloris aestuarii (strain DSM 271 / SK 413).